The sequence spans 409 residues: Argininosuccinate synthase (409 aa).

Residue 10–18 (AYSGGLDTS) coordinates ATP. Residue Tyr87 coordinates L-citrulline. Gly117 contributes to the ATP binding site. L-aspartate-binding residues include Thr119, Asn123, and Asp124. Residue Asn123 coordinates L-citrulline. L-citrulline-binding residues include Arg127, Ser175, Ser184, Glu260, and Tyr272.

This sequence belongs to the argininosuccinate synthase family. Type 1 subfamily. As to quaternary structure, homotetramer.

Its subcellular location is the cytoplasm. It carries out the reaction L-citrulline + L-aspartate + ATP = 2-(N(omega)-L-arginino)succinate + AMP + diphosphate + H(+). Its pathway is amino-acid biosynthesis; L-arginine biosynthesis; L-arginine from L-ornithine and carbamoyl phosphate: step 2/3. The sequence is that of Argininosuccinate synthase from Rubrobacter xylanophilus (strain DSM 9941 / JCM 11954 / NBRC 16129 / PRD-1).